A 1393-amino-acid polypeptide reads, in one-letter code: RNA polymerase II-associated protein 1 (1393 aa).

Disordered regions lie at residues 34 to 53, 61 to 94, and 266 to 295; these read KKGNRGGGDANSDRPPLQDH, NLPDLPPALVPSPPKRARPSPGHCLPEDEDPEER, and SHTQEQTGETASEEQRPGGPSANVTKEEPL. Pro residues predominate over residues 64 to 74; that stretch reads DLPPALVPSPP. Phosphoserine is present on serine 72. Threonine 321 is modified (phosphothreonine). Positions 496–531 are disordered; sequence PSQEDKEDEDEDEECPAGKAKRKSPEEESRPPPDLA. A compositionally biased stretch (acidic residues) spans 500–510; that stretch reads DKEDEDEDEEC. The segment covering 518–531 has biased composition (basic and acidic residues); that stretch reads KSPEEESRPPPDLA. Residue serine 1121 is modified to Phosphoserine.

It belongs to the RPAP1 family. Part of an RNA polymerase II complex that contains POLR2A, POLR2B, POLR2C, POLR2D, POLR2E, POLR2F, POLR2G, POLR2H, POLR2I, POLR2J, POLR2K, POLR2L, RPAP1, FCP1 plus the general transcription factors TFIIB and TFIIF.

It is found in the nucleus. Forms an interface between the RNA polymerase II enzyme and chaperone/scaffolding protein, suggesting that it is required to connect RNA polymerase II to regulators of protein complex formation. Required for interaction of the RNA polymerase II complex with acetylated histone H3. The chain is RNA polymerase II-associated protein 1 (RPAP1) from Homo sapiens (Human).